The sequence spans 72 residues: UPF0270 protein YheU (72 aa).

Belongs to the UPF0270 family.

This chain is UPF0270 protein YheU, found in Salmonella choleraesuis (strain SC-B67).